The primary structure comprises 899 residues: Protein translocase subunit SecA (899 aa).

ATP contacts are provided by residues Gln87, 105–109, and Asp512; that span reads GEGKT. The segment at 846–899 is disordered; the sequence is MEEEQQQQAQKKIVFNLGEEPATAPQPARSKKSASRNDPCPCGSGKKYKKCCGK. Zn(2+) contacts are provided by Cys885, Cys887, Cys896, and Cys897.

It belongs to the SecA family. As to quaternary structure, monomer and homodimer. Part of the essential Sec protein translocation apparatus which comprises SecA, SecYEG and auxiliary proteins SecDF-YajC and YidC. The cofactor is Zn(2+).

It localises to the cell inner membrane. It is found in the cytoplasm. It catalyses the reaction ATP + H2O + cellular proteinSide 1 = ADP + phosphate + cellular proteinSide 2.. Its function is as follows. Part of the Sec protein translocase complex. Interacts with the SecYEG preprotein conducting channel. Has a central role in coupling the hydrolysis of ATP to the transfer of proteins into and across the cell membrane, serving as an ATP-driven molecular motor driving the stepwise translocation of polypeptide chains across the membrane. The chain is Protein translocase subunit SecA from Geobacter metallireducens (strain ATCC 53774 / DSM 7210 / GS-15).